The primary structure comprises 639 residues: Extracellular metalloproteinase 9 (639 aa).

The signal sequence occupies residues 1-19; that stretch reads MHGLLLAAGLLSLPLRALG. Residues 20–250 constitute a propeptide that is removed on maturation; it reads HPNPNPQMHT…IHGVVDYVAD (231 aa). Asparagine 278 is a glycosylation site (N-linked (GlcNAc...) asparagine). Positions 293-312 are disordered; sequence PTTRGNNGIAQDNPSGGNQY. Residue histidine 434 coordinates Zn(2+). Residue glutamate 435 is part of the active site. Histidine 438 is a Zn(2+) binding site.

This sequence belongs to the peptidase M36 family. The cofactor is Zn(2+).

The protein localises to the secreted. Functionally, secreted metalloproteinase that allows assimilation of proteinaceous substrates and probably acts as a virulence factor. This chain is Extracellular metalloproteinase 9 (MEP9), found in Coccidioides posadasii (strain C735) (Valley fever fungus).